We begin with the raw amino-acid sequence, 370 residues long: CCA-adding enzyme (370 aa).

Residues Gly8 and Arg11 each coordinate ATP. Gly8 and Arg11 together coordinate CTP. Residues Asp21 and Asp23 each contribute to the Mg(2+) site. Residues Arg91, Arg137, and Arg140 each contribute to the ATP site. Arg91, Arg137, and Arg140 together coordinate CTP.

It belongs to the tRNA nucleotidyltransferase/poly(A) polymerase family. Bacterial CCA-adding enzyme type 2 subfamily. Mg(2+) is required as a cofactor.

The enzyme catalyses a tRNA precursor + 2 CTP + ATP = a tRNA with a 3' CCA end + 3 diphosphate. It carries out the reaction a tRNA with a 3' CCA end + 2 CTP + ATP = a tRNA with a 3' CCACCA end + 3 diphosphate. Its function is as follows. Catalyzes the addition and repair of the essential 3'-terminal CCA sequence in tRNAs without using a nucleic acid template. Adds these three nucleotides in the order of C, C, and A to the tRNA nucleotide-73, using CTP and ATP as substrates and producing inorganic pyrophosphate. tRNA 3'-terminal CCA addition is required both for tRNA processing and repair. Also involved in tRNA surveillance by mediating tandem CCA addition to generate a CCACCA at the 3' terminus of unstable tRNAs. While stable tRNAs receive only 3'-terminal CCA, unstable tRNAs are marked with CCACCA and rapidly degraded. In Pseudomonas putida (strain W619), this protein is CCA-adding enzyme.